The chain runs to 351 residues: Putative phospho-N-acetylmuramoyl-pentapeptide-transferase (351 aa).

10 helical membrane-spanning segments follow: residues 2–22, 44–64, 71–91, 158–178, 181–201, 212–232, 235–255, 258–278, 281–301, and 328–348; these read MEFL…TLFI, AGTP…VTVL, LVLT…DDLL, GEKI…GAVG, GGFY…VGAI, GMAA…LGLS, ALPF…NRHP, IFMG…AVML, TVYF…VSLL, and IVLL…YMTG.

Belongs to the glycosyltransferase 4 family. MraY subfamily. Mg(2+) serves as cofactor.

It is found in the cell membrane. The catalysed reaction is UDP-N-acetyl-alpha-D-muramoyl-L-alanyl-gamma-D-glutamyl-meso-2,6-diaminopimeloyl-D-alanyl-D-alanine + di-trans,octa-cis-undecaprenyl phosphate = di-trans,octa-cis-undecaprenyl diphospho-N-acetyl-alpha-D-muramoyl-L-alanyl-D-glutamyl-meso-2,6-diaminopimeloyl-D-alanyl-D-alanine + UMP. This is Putative phospho-N-acetylmuramoyl-pentapeptide-transferase from Methanothermobacter thermautotrophicus (strain ATCC 29096 / DSM 1053 / JCM 10044 / NBRC 100330 / Delta H) (Methanobacterium thermoautotrophicum).